The primary structure comprises 88 residues: Large ribosomal subunit protein eL31 (88 aa).

The protein belongs to the eukaryotic ribosomal protein eL31 family.

The polypeptide is Large ribosomal subunit protein eL31 (Saccharolobus islandicus (strain Y.N.15.51 / Yellowstone #2) (Sulfolobus islandicus)).